A 110-amino-acid chain; its full sequence is Protein C-ets-2 (110 aa).

Positions 1–84 (SGPIQLWQFL…AGKRYVYRFV (84 aa)) form a DNA-binding region, ETS.

This sequence belongs to the ETS family.

It is found in the nucleus. In terms of biological role, probable transcription factor. The protein is Protein C-ets-2 (ETS-2) of Lytechinus variegatus (Green sea urchin).